Consider the following 83-residue polypeptide: Small integral membrane protein 10 (83 aa).

Residues 64–82 traverse the membrane as a helical segment; sequence FFYFYILASVILNVHLQVY.

It localises to the membrane. This is Small integral membrane protein 10 (SMIM10) from Homo sapiens (Human).